A 409-amino-acid polypeptide reads, in one-letter code: Putative competence-damage inducible protein (409 aa).

Belongs to the CinA family.

This chain is Putative competence-damage inducible protein, found in Clostridium botulinum (strain Langeland / NCTC 10281 / Type F).